The following is a 202-amino-acid chain: Small ribosomal subunit protein uS4c (202 aa).

The 65-residue stretch at 90–154 folds into the S4 RNA-binding domain; that stretch reads MRLDNIIFRL…SQSIITKNLN (65 aa).

This sequence belongs to the universal ribosomal protein uS4 family. In terms of assembly, part of the 30S ribosomal subunit. Contacts protein S5. The interaction surface between S4 and S5 is involved in control of translational fidelity.

The protein resides in the plastid. It localises to the chloroplast. One of the primary rRNA binding proteins, it binds directly to 16S rRNA where it nucleates assembly of the body of the 30S subunit. In terms of biological role, with S5 and S12 plays an important role in translational accuracy. The protein is Small ribosomal subunit protein uS4c (rps4) of Ricciocarpos natans (Liverwort).